Consider the following 96-residue polypeptide: Cytoplasmic envelopment protein 3 (96 aa).

Residue Gly-2 is the site of N-myristoyl glycine; by host attachment. Positions 37-43 (DIESEEE) are asp/Glu-rich (acidic). Ser-40 is modified (phosphoserine). Positions 50-96 (PDVRVVTRAPGPQYRRPSDPPSRHTRRRDPDVARPPATLTPPLSDSE) are disordered. Basic and acidic residues predominate over residues 65–81 (RPSDPPSRHTRRRDPDV).

Belongs to the herpesviridae cytoplasmic envelopment protein 3 family. In terms of assembly, interacts with cytoplasmic envelopment protein 2; this interaction is essential for the proper localization of each protein to the assembly complex and thus for the production of infectious virus. Interacts with gE (via C-terminus). Interacts with gD (via C-terminus). Interacts with UL56. In terms of processing, myristoylation and palmitoylation (probably on one or more of the nearby cysteines at the N-terminus) enable membrane-binding and Golgi apparatus-specific targeting and are essential for efficient packaging. Phosphorylated. Phosphorylation does not seem to be required for recycling to the host Golgi apparatus. Packaging is selective for underphosphorylated forms.

It localises to the virion tegument. Its subcellular location is the virion membrane. The protein resides in the host cell membrane. The protein localises to the host Golgi apparatus membrane. Functionally, plays an important role in the cytoplasmic envelopment of tegument proteins and capsids during the assembly and egress processes. Also participates in viral entry at the fusion step probably by regulating the core fusion machinery. This Homo sapiens (Human) protein is Cytoplasmic envelopment protein 3.